A 175-amino-acid polypeptide reads, in one-letter code: ATP-dependent protease subunit HslV (175 aa).

Threonine 2 is a catalytic residue. Residues alanine 156, cysteine 159, and threonine 162 each contribute to the Na(+) site.

Belongs to the peptidase T1B family. HslV subfamily. A double ring-shaped homohexamer of HslV is capped on each side by a ring-shaped HslU homohexamer. The assembly of the HslU/HslV complex is dependent on binding of ATP.

Its subcellular location is the cytoplasm. The enzyme catalyses ATP-dependent cleavage of peptide bonds with broad specificity.. Its activity is regulated as follows. Allosterically activated by HslU binding. Protease subunit of a proteasome-like degradation complex believed to be a general protein degrading machinery. The polypeptide is ATP-dependent protease subunit HslV (Rhizobium johnstonii (strain DSM 114642 / LMG 32736 / 3841) (Rhizobium leguminosarum bv. viciae)).